The following is a 227-amino-acid chain: Phosphoribosylformylglycinamidine synthase subunit PurQ (227 aa).

The 226-residue stretch at 2–227 folds into the Glutamine amidotransferase type-1 domain; the sequence is RWAIVRFPGA…FLGLVREVAR (226 aa). The active-site Nucleophile is C85. Active-site residues include H200 and E202.

As to quaternary structure, part of the FGAM synthase complex composed of 1 PurL, 1 PurQ and 2 PurS subunits.

It is found in the cytoplasm. It catalyses the reaction N(2)-formyl-N(1)-(5-phospho-beta-D-ribosyl)glycinamide + L-glutamine + ATP + H2O = 2-formamido-N(1)-(5-O-phospho-beta-D-ribosyl)acetamidine + L-glutamate + ADP + phosphate + H(+). The catalysed reaction is L-glutamine + H2O = L-glutamate + NH4(+). The protein operates within purine metabolism; IMP biosynthesis via de novo pathway; 5-amino-1-(5-phospho-D-ribosyl)imidazole from N(2)-formyl-N(1)-(5-phospho-D-ribosyl)glycinamide: step 1/2. Its function is as follows. Part of the phosphoribosylformylglycinamidine synthase complex involved in the purines biosynthetic pathway. Catalyzes the ATP-dependent conversion of formylglycinamide ribonucleotide (FGAR) and glutamine to yield formylglycinamidine ribonucleotide (FGAM) and glutamate. The FGAM synthase complex is composed of three subunits. PurQ produces an ammonia molecule by converting glutamine to glutamate. PurL transfers the ammonia molecule to FGAR to form FGAM in an ATP-dependent manner. PurS interacts with PurQ and PurL and is thought to assist in the transfer of the ammonia molecule from PurQ to PurL. This chain is Phosphoribosylformylglycinamidine synthase subunit PurQ, found in Thermus thermophilus (strain ATCC BAA-163 / DSM 7039 / HB27).